Reading from the N-terminus, the 427-residue chain is Trigger factor (427 aa).

Residues 165-250 (GDTVVIDFEG…LHEIQEQVPA (86 aa)) form the PPIase FKBP-type domain.

It belongs to the FKBP-type PPIase family. Tig subfamily.

The protein localises to the cytoplasm. The catalysed reaction is [protein]-peptidylproline (omega=180) = [protein]-peptidylproline (omega=0). In terms of biological role, involved in protein export. Acts as a chaperone by maintaining the newly synthesized protein in an open conformation. Functions as a peptidyl-prolyl cis-trans isomerase. The protein is Trigger factor of Sulfurovum sp. (strain NBC37-1).